The following is a 221-amino-acid chain: Iron-sulfur cluster repair protein YtfE (221 aa).

This sequence belongs to the RIC family. YtfE subfamily. As to quaternary structure, homodimer.

The protein localises to the cytoplasm. Functionally, di-iron-containing protein involved in the repair of iron-sulfur clusters damaged by oxidative and nitrosative stress conditions. The protein is Iron-sulfur cluster repair protein YtfE of Edwardsiella ictaluri (strain 93-146).